A 243-amino-acid chain; its full sequence is RNA-binding protein with serine-rich domain 1 homolog (243 aa).

The interval 48-92 (SSTRQFNNTRSPSGRSASRSSNFSHRSSSRDSFSSNRSYSSSLSR) is disordered. Over residues 57–92 (RSPSGRSASRSSNFSHRSSSRDSFSSNRSYSSSLSR) the composition is skewed to low complexity. Positions 99 to 177 (RTILVENLTR…EELFVSIKRF (79 aa)) constitute an RRM domain. The disordered stretch occupies residues 189-243 (YENSYRPSRSQNNSHYNDKSFHRSRYSRARSRSPGSNISEYSDQSPPYHSYRHRP). Over residues 193–203 (YRPSRSQNNSH) the composition is skewed to polar residues. The span at 210–219 (HRSRYSRARS) shows a compositional bias: basic residues. Residues 222-235 (PGSNISEYSDQSPP) are compositionally biased toward polar residues.

Belongs to the splicing factor SR family. In terms of assembly, component of the active spliceosome.

The protein localises to the cytoplasm. It is found in the nucleus. Functionally, putative component of the spliceosome which enhances the formation of the ATP-dependent A complex of the spliceosome. may participate in mRNA 3'-end cleavage. Also mediates increase of mRNA abundance and translational efficiency. The polypeptide is RNA-binding protein with serine-rich domain 1 homolog (Schizosaccharomyces pombe (strain 972 / ATCC 24843) (Fission yeast)).